The sequence spans 1363 residues: DNA-directed RNA polymerase subunit beta' (1363 aa).

The interval 1–39 (MTSTPSKSRKSSKGSKAAKAAASAPETRPLAKTPPPFRN) is disordered. The span at 14–24 (GSKAAKAAASA) shows a compositional bias: low complexity. Residues cysteine 248, cysteine 315, cysteine 322, and cysteine 325 each coordinate Zn(2+).

This sequence belongs to the RNA polymerase beta' chain family. RpoC2 subfamily. In terms of assembly, in cyanobacteria the RNAP catalytic core is composed of 2 alpha, 1 beta, 1 beta', 1 gamma and 1 omega subunit. When a sigma factor is associated with the core the holoenzyme is formed, which can initiate transcription. The cofactor is Zn(2+).

The catalysed reaction is RNA(n) + a ribonucleoside 5'-triphosphate = RNA(n+1) + diphosphate. Functionally, DNA-dependent RNA polymerase catalyzes the transcription of DNA into RNA using the four ribonucleoside triphosphates as substrates. This Synechococcus sp. (strain WH7803) protein is DNA-directed RNA polymerase subunit beta'.